Consider the following 148-residue polypeptide: Deoxyuridine 5'-triphosphate nucleotidohydrolase (148 aa).

Residues 67-69 (RSG), Asn80, 84-86 (LID), and Met94 each bind substrate.

It belongs to the dUTPase family. Mg(2+) serves as cofactor.

It carries out the reaction dUTP + H2O = dUMP + diphosphate + H(+). It functions in the pathway pyrimidine metabolism; dUMP biosynthesis; dUMP from dCTP (dUTP route): step 2/2. This enzyme is involved in nucleotide metabolism: it produces dUMP, the immediate precursor of thymidine nucleotides and it decreases the intracellular concentration of dUTP so that uracil cannot be incorporated into DNA. The chain is Deoxyuridine 5'-triphosphate nucleotidohydrolase from Francisella tularensis subsp. tularensis (strain FSC 198).